The primary structure comprises 626 residues: Basic helix-loop-helix ARNT-like protein 1 (626 aa).

The tract at residues 1–58 (MADQRMDISSTISDFMSPGPTDLLSGSLSTSGVDCNRKRKGSATDYQESMDTDKDDPH) is disordered. Phosphoserine; by GSK3-beta is present on S17. The segment covering 17-32 (SPGPTDLLSGSLSTSG) has biased composition (low complexity). T21 carries the phosphothreonine; by GSK3-beta modification. Positions 36 to 41 (NRKRKG) match the Nuclear localization signal motif. The 54-residue stretch at 72–125 (NAREAHSQIEKRRRDKMNSFIDELASLVPTCNAMSRKLDKLTVLRMAVQHMKTL) folds into the bHLH domain. Position 78 is a phosphoserine (S78). S90 bears the Phosphoserine; by CK2 mark. The short motif at 142-152 (LSDDELKHLIL) is the Nuclear export signal 1 element. Positions 143-215 (SDDELKHLIL…EQLSSSDTAP (73 aa)) constitute a PAS 1 domain. Residue K252 forms a Glycyl lysine isopeptide (Lys-Gly) (interchain with G-Cter in SUMO2 and SUMO3) linkage. K259 participates in a covalent cross-link: Glycyl lysine isopeptide (Lys-Gly) (interchain with G-Cter in SUMO); alternate. K259 participates in a covalent cross-link: Glycyl lysine isopeptide (Lys-Gly) (interchain with G-Cter in SUMO2); alternate. Residues 326–396 (PQPVNGEIRV…ECHRQVLQTR (71 aa)) enclose the PAS 2 domain. The short motif at 361–369 (LAYLPQELL) is the Nuclear export signal 2 element. Residues 401–444 (TNCYKFKIKDGSFITLRSRWFSFMNPWTKEVEYIVSTNTVVLAN) enclose the PAC domain. Disordered stretches follow at residues 459-492 (SPHS…RAGA) and 511-595 (GSSP…SPSN). Positions 508-588 (RIRGSSPSSC…IGIDMIDNDQ (81 aa)) are interaction with CIART. The span at 511–521 (GSSPSSCGSSP) shows a compositional bias: low complexity. At K538 the chain carries N6-acetyllysine.

Component of the circadian clock oscillator which includes the CRY1/2 proteins, CLOCK or NPAS2, BMAL1 or BMAL2, CSNK1D and/or CSNK1E, TIMELESS and the PER1/2/3 proteins. Forms a heterodimer with CLOCK. The CLOCK-BMAL1 heterodimer is required for E-box-dependent transactivation, for CLOCK nuclear translocation and degradation, and, for phosphorylation of both CLOCK and BMAL1. Part of a nuclear complex which also includes RACK1 and PRKCA; RACK1 and PRKCA are recruited to the complex in a circadian manner. Interacts with NPAS2. Interacts with EZH2. Interacts with SUMO3. Interacts with SIRT1. Interacts with AHR. Interacts with ID1, ID2 and ID3. Interacts with DDX4. Interacts with OGT. Interacts with EED and SUZ12. Interacts with MTA1. Interacts with CIART. Interacts with HSP90. Interacts with KAT2B and EP300. Interacts with BHLHE40/DEC1 and BHLHE41/DEC2. Interacts with RELB and the interaction is enhanced in the presence of CLOCK. Interacts with PER1, PER2, CRY1 and CRY2 and this interaction requires a translocation to the nucleus. Interaction of the CLOCK-BMAL1 heterodimer with PER or CRY inhibits transcription activation. Interaction of the CLOCK-BMAL1 with CRY1 is independent of DNA but with PER2 is off DNA. The CLOCK-BMAL1 heterodimer interacts with GSK3B. Interacts with KDM5A. Interacts with KMT2A; in a circadian manner. Interacts with UBE3A. Interacts with PRKCG. Interacts with MAGEL2. Interacts with NCOA2. Interacts with THRAP3. The CLOCK-BMAL1 heterodimer interacts with PASD1. Interacts with PASD1. Interacts with USP9X. Interacts with PIWIL2 (via PIWI domain). Interacts with HDAC3. Interacts with HNF4A. In terms of processing, ubiquitinated, leading to its proteasomal degradation. Deubiquitinated by USP9X. O-glycosylated; contains O-GlcNAc. O-glycosylation by OGT prevents protein degradation by inhibiting ubiquitination. It also stabilizes the CLOCK-BMAL1 heterodimer thereby increasing CLOCK-BMAL1-mediated transcription of genes in the negative loop of the circadian clock such as PER1/2/3 and CRY1/2. Post-translationally, acetylated on Lys-538 by CLOCK during the repression phase of the circadian cycle. Acetylation facilitates recruitment of CRY1 protein and initiates the repression phase of the circadian cycle. Acetylated at Lys-538 by KAT5 during the activation phase of the cycle, leading to recruitment of the positive transcription elongation factor b (P-TEFb) and BRD4, followed by productive elongation of circadian transcripts. Deacetylated by SIRT1, which may result in decreased protein stability. In terms of processing, phosphorylated upon dimerization with CLOCK. Phosphorylation enhances the transcriptional activity, alters the subcellular localization and decreases the stability of the CLOCK-BMAL1 heterodimer by promoting its degradation. Phosphorylation shows circadian variations in the liver with a peak between CT10 to CT14. Phosphorylation at Ser-90 by CK2 is essential for its nuclear localization, its interaction with CLOCK and controls CLOCK nuclear entry. Dephosphorylation at Ser-78 is important for dimerization with CLOCK and transcriptional activity. Sumoylated on Lys-259 upon dimerization with CLOCK. Predominantly conjugated to poly-SUMO2/3 rather than SUMO1 and the level of these conjugates undergo rhythmic variation, peaking at CT9-CT12. Sumoylation localizes it exclusively to the PML body and promotes its ubiquitination in the PML body, ubiquitin-dependent proteasomal degradation and the transcriptional activity of the CLOCK-BMAL1 heterodimer. Post-translationally, undergoes lysosome-mediated degradation in a time-dependent manner in the liver.

The protein localises to the nucleus. Its subcellular location is the cytoplasm. It is found in the PML body. Its function is as follows. Transcriptional activator which forms a core component of the circadian clock. The circadian clock, an internal time-keeping system, regulates various physiological processes through the generation of approximately 24 hour circadian rhythms in gene expression, which are translated into rhythms in metabolism and behavior. It is derived from the Latin roots 'circa' (about) and 'diem' (day) and acts as an important regulator of a wide array of physiological functions including metabolism, sleep, body temperature, blood pressure, endocrine, immune, cardiovascular, and renal function. Consists of two major components: the central clock, residing in the suprachiasmatic nucleus (SCN) of the brain, and the peripheral clocks that are present in nearly every tissue and organ system. Both the central and peripheral clocks can be reset by environmental cues, also known as Zeitgebers (German for 'timegivers'). The predominant Zeitgeber for the central clock is light, which is sensed by retina and signals directly to the SCN. The central clock entrains the peripheral clocks through neuronal and hormonal signals, body temperature and feeding-related cues, aligning all clocks with the external light/dark cycle. Circadian rhythms allow an organism to achieve temporal homeostasis with its environment at the molecular level by regulating gene expression to create a peak of protein expression once every 24 hours to control when a particular physiological process is most active with respect to the solar day. Transcription and translation of core clock components (CLOCK, NPAS2, BMAL1, BMAL2, PER1, PER2, PER3, CRY1 and CRY2) plays a critical role in rhythm generation, whereas delays imposed by post-translational modifications (PTMs) are important for determining the period (tau) of the rhythms (tau refers to the period of a rhythm and is the length, in time, of one complete cycle). A diurnal rhythm is synchronized with the day/night cycle, while the ultradian and infradian rhythms have a period shorter and longer than 24 hours, respectively. Disruptions in the circadian rhythms contribute to the pathology of cardiovascular diseases, cancer, metabolic syndromes and aging. A transcription/translation feedback loop (TTFL) forms the core of the molecular circadian clock mechanism. Transcription factors, CLOCK or NPAS2 and BMAL1 or BMAL2, form the positive limb of the feedback loop, act in the form of a heterodimer and activate the transcription of core clock genes and clock-controlled genes (involved in key metabolic processes), harboring E-box elements (5'-CACGTG-3') within their promoters. The core clock genes: PER1/2/3 and CRY1/2 which are transcriptional repressors form the negative limb of the feedback loop and interact with the CLOCK|NPAS2-BMAL1|BMAL2 heterodimer inhibiting its activity and thereby negatively regulating their own expression. This heterodimer also activates nuclear receptors NR1D1/2 and RORA/B/G, which form a second feedback loop and which activate and repress BMAL1 transcription, respectively. BMAL1 positively regulates myogenesis and negatively regulates adipogenesis via the transcriptional control of the genes of the canonical Wnt signaling pathway. Plays a role in normal pancreatic beta-cell function; regulates glucose-stimulated insulin secretion via the regulation of antioxidant genes NFE2L2/NRF2 and its targets SESN2, PRDX3, CCLC and CCLM. Negatively regulates the mTORC1 signaling pathway; regulates the expression of MTOR and DEPTOR. Controls diurnal oscillations of Ly6C inflammatory monocytes; rhythmic recruitment of the PRC2 complex imparts diurnal variation to chemokine expression that is necessary to sustain Ly6C monocyte rhythms. Regulates the expression of HSD3B2, STAR, PTGS2, CYP11A1, CYP19A1 and LHCGR in the ovary and also the genes involved in hair growth. Plays an important role in adult hippocampal neurogenesis by regulating the timely entry of neural stem/progenitor cells (NSPCs) into the cell cycle and the number of cell divisions that take place prior to cell-cycle exit. Regulates the circadian expression of CIART and KLF11. The CLOCK-BMAL1 heterodimer regulates the circadian expression of SERPINE1/PAI1, VWF, B3, CCRN4L/NOC, NAMPT, DBP, MYOD1, PPARGC1A, PPARGC1B, SIRT1, GYS2, F7, NGFR, GNRHR, BHLHE40/DEC1, ATF4, MTA1, KLF10 and also genes implicated in glucose and lipid metabolism. Promotes rhythmic chromatin opening, regulating the DNA accessibility of other transcription factors. May play a role in spermatogenesis; contributes to the chromatoid body assembly and physiology. The NPAS2-BMAL1 heterodimer positively regulates the expression of MAOA, F7 and LDHA and modulates the circadian rhythm of daytime contrast sensitivity by regulating the rhythmic expression of adenylate cyclase type 1 (ADCY1) in the retina. The preferred binding motif for the CLOCK-BMAL1 heterodimer is 5'-CACGTGA-3', which contains a flanking adenine nucleotide at the 3-prime end of the canonical 6-nucleotide E-box sequence. CLOCK specifically binds to the half-site 5'-CAC-3', while BMAL1 binds to the half-site 5'-GTGA-3'. The CLOCK-BMAL1 heterodimer also recognizes the non-canonical E-box motifs 5'-AACGTGA-3' and 5'-CATGTGA-3'. Essential for the rhythmic interaction of CLOCK with ASS1 and plays a critical role in positively regulating CLOCK-mediated acetylation of ASS1. Plays a role in protecting against lethal sepsis by limiting the expression of immune checkpoint protein CD274 in macrophages in a PKM2-dependent manner. Regulates the diurnal rhythms of skeletal muscle metabolism via transcriptional activation of genes promoting triglyceride synthesis (DGAT2) and metabolic efficiency (COQ10B). This is Basic helix-loop-helix ARNT-like protein 1 from Rattus norvegicus (Rat).